We begin with the raw amino-acid sequence, 219 residues long: ATP-dependent Clp protease proteolytic subunit (219 aa).

Residues 1–22 form a disordered region; that stretch reads MPVGVPKVPFLNPNPDPEPDSV. Residue serine 116 is the Nucleophile of the active site. Residue histidine 141 is part of the active site.

Belongs to the peptidase S14 family. In terms of assembly, component of the chloroplastic Clp protease core complex.

It localises to the plastid. Its subcellular location is the chloroplast stroma. The enzyme catalyses Hydrolysis of proteins to small peptides in the presence of ATP and magnesium. alpha-casein is the usual test substrate. In the absence of ATP, only oligopeptides shorter than five residues are hydrolyzed (such as succinyl-Leu-Tyr-|-NHMec, and Leu-Tyr-Leu-|-Tyr-Trp, in which cleavage of the -Tyr-|-Leu- and -Tyr-|-Trp bonds also occurs).. Cleaves peptides in various proteins in a process that requires ATP hydrolysis. Has a chymotrypsin-like activity. Plays a major role in the degradation of misfolded proteins. The chain is ATP-dependent Clp protease proteolytic subunit from Pelargonium hortorum (Common geranium).